The following is a 213-amino-acid chain: Nucleolar protein 12 (213 aa).

The stretch at 33–96 (GFHKRKVERK…RLVTAKTESV (64 aa)) forms a coiled coil. Residues 109–213 (TISDLDLSGA…LTGKAQHSRE (105 aa)) are disordered. A compositionally biased stretch (acidic residues) spans 130–139 (AGDESEEEAS). A compositionally biased stretch (basic residues) spans 170-182 (AHSRKKVKRKHPR).

This sequence belongs to the RRP17 family. Interacts with KIAA1191.

It is found in the nucleus. It localises to the nucleolus. The protein localises to the cytoplasm. In terms of biological role, multifunctional RNA binding protein that plays a role in RNA metabolism and DNA maintenance. Participates in the resolution of DNA stress and the maintenance of genome integrity by localizing to sites of DNA insults. Also plays a role in proper nucleolar organization by limiting nucleolar size and regulating nucleolar number. Mechanistically, regulates the nucleolar levels of fibrillarin and nucleolin, two key players in pre-rRNA processing and ribosome assembly. This is Nucleolar protein 12 (NOL12) from Pongo abelii (Sumatran orangutan).